The sequence spans 617 residues: Cell pattern formation-associated protein STUA (617 aa).

Residues methionine 1–leucine 79 are disordered. A compositionally biased stretch (polar residues) spans threonine 24 to serine 34. The segment covering proline 45–tyrosine 58 has biased composition (low complexity). A compositionally biased stretch (polar residues) spans glycine 61–glutamine 76. One can recognise an HTH APSES-type domain in the interval arginine 106–proline 212. A DNA-binding region (H-T-H motif) is located at residues glycine 140–glutamate 161. Disordered stretches follow at residues alanine 223–proline 274, serine 300–alanine 451, and alanine 463–arginine 617. Low complexity-rich tracts occupy residues glutamine 305 to alanine 318 and proline 334 to threonine 345. Composition is skewed to polar residues over residues isoleucine 346–asparagine 361 and proline 368–serine 382. Over residues glutamate 438–histidine 447 the composition is skewed to basic and acidic residues. Residues proline 488–alanine 509 show a composition bias toward low complexity. Polar residues-rich tracts occupy residues glutamine 519 to arginine 533 and serine 553 to asparagine 563. Positions lysine 569–lysine 593 are nuclear localization domain. Positions glutamine 599–arginine 617 are enriched in low complexity.

It belongs to the EFG1/PHD1/stuA family.

It localises to the nucleus. In terms of biological role, transcription factor that regulates asexual reproduction. Binds the StuA-response elements (StRE) with the consensus sequence 5'-(A/T)CGCG(T/A)N(A/C)-3' at the promoters of target genes. Required for the formation of aerial hyphae, efficient conidiation, and the formation of perithecia. Essential for the generation of normal turgor pressure within the appressorium. Required for infection of intact apple fruit and penetration of onion epidermal cells. This is Cell pattern formation-associated protein STUA from Colletotrichum gloeosporioides (Anthracnose fungus).